The following is a 264-amino-acid chain: Glutamate 5-kinase (264 aa).

Lys-9 provides a ligand contact to ATP. Residues Ser-47, Asp-132, and Asn-144 each coordinate substrate. Residues 164–165 and 206–212 each bind ATP; these read SD and TGGIVTK.

Belongs to the glutamate 5-kinase family.

The protein localises to the cytoplasm. The enzyme catalyses L-glutamate + ATP = L-glutamyl 5-phosphate + ADP. It functions in the pathway amino-acid biosynthesis; L-proline biosynthesis; L-glutamate 5-semialdehyde from L-glutamate: step 1/2. Catalyzes the transfer of a phosphate group to glutamate to form L-glutamate 5-phosphate. The chain is Glutamate 5-kinase from Helicobacter hepaticus (strain ATCC 51449 / 3B1).